Reading from the N-terminus, the 430-residue chain is DD-carboxypeptidase/endopeptidase Mpg (430 aa).

Positions 295, 299, and 375 each coordinate Zn(2+).

It belongs to the peptidase M23B family. In terms of assembly, monomer. Requires Zn(2+) as cofactor. Post-translationally, likely to be synthesized as a proenzyme. The cleavage of the N-terminal domain is probably required for the activation of the enzyme.

It is found in the cell outer membrane. With respect to regulation, peptidoglycan (PG) degradation activity is completely inhibited by zinc chelating EDTA and phenanthroline. In terms of biological role, has both endopeptidase and DD-carboxypeptidase activities. Degrades cell wall peptidoglycan (PG) to allow consummate expression of pili. Degrades N.gonorrhoeae and E.coli PG side chains in vitro. Required for proper piliation, which in turn is required for normal colony morphology, resistance to H(2)O(2) damage and defense against killing by human polymorphonuclear leukocytes (PMNs). Involved in type IV pilus biogenesis. Involved in resistance against non-oxidative killing by adherent CXCL8/IL8-primed human PMNs. Protects from killing by PMN-produced antimicrobial factors, which kill by a mechanism completely independent of reactive oxygen species (ROS) production of the PMNs. Provides protection against oxidative damage caused by peroxides H(2)O(2) and cumene hydroperoxide in vitro. In Neisseria gonorrhoeae (strain ATCC 700825 / FA 1090), this protein is DD-carboxypeptidase/endopeptidase Mpg.